The sequence spans 495 residues: Protein YhjJ (495 aa).

The first 24 residues, 1–24, serve as a signal peptide directing secretion; it reads MQGTKIRLLAGSLLMLASAGYVQA.

This sequence belongs to the peptidase M16 family.

It is found in the periplasm. The chain is Protein YhjJ (yhjJ) from Salmonella typhimurium (strain LT2 / SGSC1412 / ATCC 700720).